Here is a 419-residue protein sequence, read N- to C-terminus: LWamide neuropeptides (419 aa).

The N-terminal stretch at Met1–Ala27 is a signal peptide. The interval Ala27–Asn48 is disordered. Residues Lys28 to Gln104 constitute a propeptide that is removed on maturation. Tryptophan amide is present on Trp110. The propeptide occupies Glu113–Ala140. A compositionally biased stretch (basic and acidic residues) spans Arg120–Gln132. The interval Arg120–Asp332 is disordered. Trp146 carries the tryptophan amide modification. Positions Asp149–Ala150 are excised as a propeptide. A Tryptophan amide modification is found at Trp156. A propeptide spanning residues Asp159–Ala160 is cleaved from the precursor. The residue at position 166 (Trp166) is a Tryptophan amide. Positions Asp169 to Ala170 are excised as a propeptide. The residue at position 176 (Trp176) is a Tryptophan amide. The propeptide occupies Asp179 to Ala180. Trp186 bears the Tryptophan amide mark. Residues Asp189–Ala190 constitute a propeptide that is removed on maturation. A Tryptophan amide modification is found at Trp196. Residues Asp199 to Ala200 constitute a propeptide that is removed on maturation. Residue Trp206 is modified to Tryptophan amide. Positions Asp209–Ala210 are excised as a propeptide. Tryptophan amide is present on Trp216. A propeptide spans Gly218 to Ala220 (seems to have a sequencing error or a mutation in position 218; Gly instead of Arg). At Trp226 the chain carries Tryptophan amide. Positions Asp229–Ala230 are excised as a propeptide. At Trp236 the chain carries Tryptophan amide. A propeptide spanning residues Asp239 to Ala240 is cleaved from the precursor. Position 246 is a tryptophan amide (Trp246). A propeptide spanning residues Asp249 to Ala250 is cleaved from the precursor. Trp256 carries the post-translational modification Tryptophan amide. The propeptide occupies Asp259–Ala260. The residue at position 266 (Trp266) is a Tryptophan amide. The propeptide occupies Asp269–Ala270. A Tryptophan amide modification is found at Trp276. The propeptide occupies Asp279 to Thr280. The residue at position 286 (Trp286) is a Tryptophan amide. Positions Asp289–Ala290 are excised as a propeptide. The residue at position 296 (Trp296) is a Tryptophan amide. 2 propeptides span residues Asp299 to Ala300 and Asp309 to Ala320. Trp326 carries the tryptophan amide modification. Positions Gln329–Phe419 are excised as a propeptide.

Belongs to the LWamide neuropeptide family. In planula larvae, expressed in a narrow ring of ectodermal neurosensory cells around the widest circumference at the anterior of the larvae. In primary polyps, expression is confined to endodermal cells of the hypostome. In mature polyps, expression is strong in the epidermis from the tentacle level to the base of the polyp and weak in the gastrodermal cells in the apical hypostome.

It is found in the secreted. Its function is as follows. LWamide peptides may be involved in induction of metamorphosis. This Hydractinia echinata (Snail fur) protein is LWamide neuropeptides.